The primary structure comprises 156 residues: Small ribosomal subunit protein uS7 (156 aa).

It belongs to the universal ribosomal protein uS7 family. In terms of assembly, part of the 30S ribosomal subunit. Contacts proteins S9 and S11.

One of the primary rRNA binding proteins, it binds directly to 16S rRNA where it nucleates assembly of the head domain of the 30S subunit. Is located at the subunit interface close to the decoding center, probably blocks exit of the E-site tRNA. In Campylobacter concisus (strain 13826), this protein is Small ribosomal subunit protein uS7.